Consider the following 671-residue polypeptide: TOM1-like protein 6 (671 aa).

Position 2 is an N-acetylalanine (Ala2). The region spanning 15–144 (ATSDLLLGPD…ELRRSGVEFP (130 aa)) is the VHS domain. Ser147 carries the post-translational modification Phosphoserine. In terms of domain architecture, GAT spans 229–317 (EVEGLSLSSI…LLAKHDAIAS (89 aa)). 2 disordered regions span residues 320-620 (PLPV…VGQK) and 636-671 (GSAD…RKMI). Positions 334-362 (ASKPADSSPKSSEAKDSSSIAGSSSPIPA) are enriched in low complexity. Positions 372–382 (DEEYEEEEDEF) are enriched in acidic residues. The segment covering 395–405 (SVTTDPTSLES) has biased composition (polar residues). The segment covering 407–417 (NAASNALALAL) has biased composition (low complexity). The segment covering 444 to 459 (STPPAPSSQPSPPPPA) has biased composition (pro residues). Over residues 483–554 (AQQQQPQQPQ…QPSTRPQNPY (72 aa)) the composition is skewed to low complexity. Composition is skewed to polar residues over residues 562–598 (ASTS…NSFP) and 605–616 (QATSTASNSGVS). At Ser596 the chain carries Phosphoserine. Residues 647–663 (NSSNGSQNLSGSQTQQS) are compositionally biased toward low complexity.

It belongs to the TOM1 family. In terms of tissue distribution, ubiquitously expressed.

It is found in the endosome. The protein resides in the multivesicular body. Its subcellular location is the cytoplasm. The protein localises to the early endosome membrane. Its function is as follows. Acts as a gatekeeper for degradative protein sorting to the vacuole. Plays a role in recognition of ubiquitinated PIN2 auxin carrier at the plasma membrane and further to its endocytic sorting. Binds ubiquitin in vitro. Might contribute to the loading of the ESCRT machinery. The polypeptide is TOM1-like protein 6 (Arabidopsis thaliana (Mouse-ear cress)).